The sequence spans 233 residues: MFRIIKWLIALPVGIFIFFNAYVYGNIITYRAVAPHRTAFMSMRMKQFEQEGRDVALDYRWMPYKRISTNLKKALIASEDARFAGHGGFDWGGIQNAIRRNRNSGKVKAGGSTISQQLAKNLFLNESRSYIRKGEEAAITAMMEAVTDKDRIFELYLNSIEWHYGVFGAEAASRYFYQIPAAKLTKQQAAKLTARVPAPLYYADHPKSKRLRNKTNIVLRRMGSAELPESDTD.

A helical transmembrane segment spans residues 8-28 (LIALPVGIFIFFNAYVYGNII).

Belongs to the glycosyltransferase 51 family.

It is found in the cell inner membrane. The enzyme catalyses [GlcNAc-(1-&gt;4)-Mur2Ac(oyl-L-Ala-gamma-D-Glu-L-Lys-D-Ala-D-Ala)](n)-di-trans,octa-cis-undecaprenyl diphosphate + beta-D-GlcNAc-(1-&gt;4)-Mur2Ac(oyl-L-Ala-gamma-D-Glu-L-Lys-D-Ala-D-Ala)-di-trans,octa-cis-undecaprenyl diphosphate = [GlcNAc-(1-&gt;4)-Mur2Ac(oyl-L-Ala-gamma-D-Glu-L-Lys-D-Ala-D-Ala)](n+1)-di-trans,octa-cis-undecaprenyl diphosphate + di-trans,octa-cis-undecaprenyl diphosphate + H(+). Its pathway is cell wall biogenesis; peptidoglycan biosynthesis. In terms of biological role, peptidoglycan polymerase that catalyzes glycan chain elongation from lipid-linked precursors. This is Biosynthetic peptidoglycan transglycosylase from Neisseria meningitidis serogroup A / serotype 4A (strain DSM 15465 / Z2491).